Consider the following 126-residue polypeptide: Probable prefoldin subunit 4 (126 aa).

Belongs to the prefoldin subunit beta family. In terms of assembly, heterohexamer of two PFD-alpha type and four PFD-beta type subunits.

Its function is as follows. Binds specifically to cytosolic chaperonin (c-CPN) and transfers target proteins to it. Binds to nascent polypeptide chain and promotes folding in an environment in which there are many competing pathways for nonnative proteins. The sequence is that of Probable prefoldin subunit 4 (pfd-4) from Caenorhabditis elegans.